Here is a 202-residue protein sequence, read N- to C-terminus: Peptide deformylase (202 aa).

The segment at 1–24 is disordered; that stretch reads MAGSFAQLAKNAEKKKPSISVSKE. Cysteine 121 and histidine 163 together coordinate Fe cation. Glutamate 164 is a catalytic residue. Residue histidine 167 coordinates Fe cation.

This sequence belongs to the polypeptide deformylase family. The cofactor is Fe(2+).

The enzyme catalyses N-terminal N-formyl-L-methionyl-[peptide] + H2O = N-terminal L-methionyl-[peptide] + formate. Functionally, removes the formyl group from the N-terminal Met of newly synthesized proteins. Requires at least a dipeptide for an efficient rate of reaction. N-terminal L-methionine is a prerequisite for activity but the enzyme has broad specificity at other positions. This is Peptide deformylase from Prochlorococcus marinus (strain NATL1A).